An 88-amino-acid chain; its full sequence is Small ribosomal subunit protein bS16 (88 aa).

The protein belongs to the bacterial ribosomal protein bS16 family.

The protein is Small ribosomal subunit protein bS16 of Staphylococcus saprophyticus subsp. saprophyticus (strain ATCC 15305 / DSM 20229 / NCIMB 8711 / NCTC 7292 / S-41).